Here is a 339-residue protein sequence, read N- to C-terminus: D-erythrose-4-phosphate dehydrogenase (339 aa).

Residues 12–13 and Arg-81 each bind NAD(+); that span reads RI. Residues 154-156, Arg-200, 213-214, and Arg-236 contribute to the substrate site; these read SCT and TK. Cys-155 (nucleophile) is an active-site residue. Residue Asn-318 coordinates NAD(+).

As to quaternary structure, homotetramer.

Its subcellular location is the cytoplasm. The catalysed reaction is D-erythrose 4-phosphate + NAD(+) + H2O = 4-phospho-D-erythronate + NADH + 2 H(+). It participates in cofactor biosynthesis; pyridoxine 5'-phosphate biosynthesis; pyridoxine 5'-phosphate from D-erythrose 4-phosphate: step 1/5. Functionally, catalyzes the NAD-dependent conversion of D-erythrose 4-phosphate to 4-phosphoerythronate. This Escherichia coli (strain K12) protein is D-erythrose-4-phosphate dehydrogenase (epd).